A 953-amino-acid polypeptide reads, in one-letter code: Isoleucine--tRNA ligase (953 aa).

The 'HIGH' region motif lies at 58-68 (PYANGSIHIGH). Glutamate 577 contacts L-isoleucyl-5'-AMP. The 'KMSKS' region signature appears at 618-622 (KMSKS). Lysine 621 lines the ATP pocket. Zn(2+)-binding residues include cysteine 916, cysteine 919, cysteine 936, and cysteine 939.

This sequence belongs to the class-I aminoacyl-tRNA synthetase family. IleS type 1 subfamily. As to quaternary structure, monomer. Requires Zn(2+) as cofactor.

Its subcellular location is the cytoplasm. It catalyses the reaction tRNA(Ile) + L-isoleucine + ATP = L-isoleucyl-tRNA(Ile) + AMP + diphosphate. Functionally, catalyzes the attachment of isoleucine to tRNA(Ile). As IleRS can inadvertently accommodate and process structurally similar amino acids such as valine, to avoid such errors it has two additional distinct tRNA(Ile)-dependent editing activities. One activity is designated as 'pretransfer' editing and involves the hydrolysis of activated Val-AMP. The other activity is designated 'posttransfer' editing and involves deacylation of mischarged Val-tRNA(Ile). The protein is Isoleucine--tRNA ligase of Aeromonas salmonicida (strain A449).